The primary structure comprises 167 residues: uncharacterized protein (167 aa).

2 helical membrane-spanning segments follow: residues 96–115 (YVPA…FNFY) and 119–138 (WGAL…IIAV).

It is found in the cell membrane. This is an uncharacterized protein from Bacillus subtilis (strain 168).